Consider the following 501-residue polypeptide: Tegument protein US24 (501 aa).

This sequence belongs to the herpesviridae US22 family.

The protein localises to the virion tegument. The polypeptide is Tegument protein US24 (US24) (Human cytomegalovirus (strain AD169) (HHV-5)).